We begin with the raw amino-acid sequence, 235 residues long: Orotidine 5'-phosphate decarboxylase (235 aa).

Substrate contacts are provided by residues D10, K32, 59 to 68 (DLKLHDIPNT), T123, R184, Q193, G213, and R214. K61 serves as the catalytic Proton donor.

It belongs to the OMP decarboxylase family. Type 1 subfamily. Homodimer.

The catalysed reaction is orotidine 5'-phosphate + H(+) = UMP + CO2. It functions in the pathway pyrimidine metabolism; UMP biosynthesis via de novo pathway; UMP from orotate: step 2/2. In terms of biological role, catalyzes the decarboxylation of orotidine 5'-monophosphate (OMP) to uridine 5'-monophosphate (UMP). The chain is Orotidine 5'-phosphate decarboxylase from Paramagnetospirillum magneticum (strain ATCC 700264 / AMB-1) (Magnetospirillum magneticum).